The sequence spans 361 residues: PTI1-like tyrosine-protein kinase 1 (361 aa).

Positions 16 to 43 (EEQQLKSSQQQSDANHKNSKPAPVAKHE) are disordered. A Protein kinase domain is found at 68–350 (FGSKALIGEG…IVVKALQPLL (283 aa)). ATP is bound by residues 74-82 (IGEGSYGRV) and Lys96. Asp200 acts as the Proton acceptor in catalysis.

It belongs to the protein kinase superfamily. Tyr protein kinase family. As to quaternary structure, interacts with OXI1. Post-translationally, autophosphorylated and phosphorylated by OXI1.

Its subcellular location is the cell membrane. The enzyme catalyses L-tyrosyl-[protein] + ATP = O-phospho-L-tyrosyl-[protein] + ADP + H(+). The sequence is that of PTI1-like tyrosine-protein kinase 1 (PTI11) from Arabidopsis thaliana (Mouse-ear cress).